We begin with the raw amino-acid sequence, 95 residues long: Progonadoliberin-1 (95 aa).

The N-terminal stretch at 1 to 23 (MAPQTSNLWLLLVVMMVMSQGCC) is a signal peptide. Q24 carries the post-translational modification Pyrrolidone carboxylic acid. At G33 the chain carries Glycine amide.

The protein belongs to the GnRH family.

The protein localises to the secreted. Stimulates the secretion of gonadotropins. This Pagrus major (Red sea bream) protein is Progonadoliberin-1 (gnrh1).